The primary structure comprises 254 residues: Countin-2 (254 aa).

The signal sequence occupies residues 1–19 (MMIKYITIAILFIASLVKA). The Saposin B-type domain maps to 22-107 (QFSLCPTCVD…EELTVCPKNQ (86 aa)). 3 disulfides stabilise this stretch: Cys-26/Cys-103, Cys-29/Cys-97, and Cys-56/Cys-68. Asn-110 and Asn-219 each carry an N-linked (GlcNAc...) asparagine glycan. Residues 231-254 (QMTGTGSGSGSGSGSSSGAAYLRY) form a disordered region. The segment covering 233–245 (TGTGSGSGSGSGS) has biased composition (gly residues).

Belongs to the countin family.

Its subcellular location is the secreted. Its function is as follows. Cell-counting factor that limits the minimum size of the multicellular structure. May up-regulate the expression of both gp24 and gp80, which mediate cell adhesion. This chain is Countin-2 (ctnB), found in Dictyostelium discoideum (Social amoeba).